A 306-amino-acid chain; its full sequence is MDTPPLSDSESESDESLVTDRELQDAFSRGLLKPGLNVVLEGPKKAVNDVNGLKQCLAEFKRDLEWVERLDVTLGPVPEIGGSEAPAPQNKDQKAVDPEDDFQREMSFYRQAQAAVLAVLPRLHQLKVPTKRPTDYFAEMAKSDLQMQKIRQKLQTKQAAMERSEKAKQLRALRKYGKKVQTEVLQKRQQEKAHMMNAIKKYQKGFSDKLDFLEGDQKPLAQRKKAGAKGQQMRKGPSAKRRYKNQKFGFGGKKKGSKWNTRESYDDVSSFRAKTAHGRGLKRPGKKGSNKRPGKRTREKMKNRTH.

Position 1 is an N-acetylmethionine (Met1). 2 disordered regions span residues 1–20 (MDTPPLSDSESESDESLVTD) and 77–99 (VPEIGGSEAPAPQNKDQKAVDPE). Thr3 is subject to Phosphothreonine. A phosphoserine mark is found at Ser7, Ser9, Ser11, Ser13, and Ser16. A Glycyl lysine isopeptide (Lys-Gly) (interchain with G-Cter in SUMO2) cross-link involves residue Lys94. Residues 138 to 169 (AEMAKSDLQMQKIRQKLQTKQAAMERSEKAKQ) adopt a coiled-coil conformation. Glycyl lysine isopeptide (Lys-Gly) (interchain with G-Cter in SUMO2) cross-links involve residues Lys179 and Lys218. The segment at 213-306 (LEGDQKPLAQ…TREKMKNRTH (94 aa)) is disordered. 2 positions are modified to phosphoserine: Ser264 and Ser270. A compositionally biased stretch (basic residues) spans 274-306 (KTAHGRGLKRPGKKGSNKRPGKRTREKMKNRTH).

It belongs to the EBP2 family. Specifically interacts with EBV EBNA1. The EBNA1-EBP2 interaction is important for the stable segregation of EBV episomes during cell division. Interacts with WDR46. Ubiquitous.

Its subcellular location is the nucleus. The protein resides in the nucleolus. Its function is as follows. Required for the processing of the 27S pre-rRNA. This Homo sapiens (Human) protein is Probable rRNA-processing protein EBP2 (EBNA1BP2).